A 50-amino-acid chain; its full sequence is MIVLPRKYGKASRKCSRCGDHSALVRRYGLMLCRQCFRELAPKIGFKKYN.

Positions 15, 18, 33, and 36 each coordinate Zn(2+).

The protein belongs to the universal ribosomal protein uS14 family. Zinc-binding uS14 subfamily. As to quaternary structure, part of the 30S ribosomal subunit. Zn(2+) serves as cofactor.

Functionally, binds 16S rRNA, required for the assembly of 30S particles. The protein is Small ribosomal subunit protein uS14 of Methanothermobacter thermautotrophicus (strain ATCC 29096 / DSM 1053 / JCM 10044 / NBRC 100330 / Delta H) (Methanobacterium thermoautotrophicum).